We begin with the raw amino-acid sequence, 395 residues long: S-adenosylmethionine synthase (395 aa).

His-16 lines the ATP pocket. Mg(2+) is bound at residue Asp-18. K(+) is bound at residue Glu-44. Positions 57 and 100 each coordinate L-methionine. Residues 100-110 (QSPDIAQGVDR) are flexible loop. Residues 167–169 (DAK), 233–234 (RF), Asp-242, 248–249 (RK), Ala-265, and Lys-269 each bind ATP. L-methionine is bound at residue Asp-242. An L-methionine-binding site is contributed by Lys-273.

This sequence belongs to the AdoMet synthase family. As to quaternary structure, homotetramer; dimer of dimers. The cofactor is Mg(2+). Requires K(+) as cofactor.

The protein localises to the cytoplasm. It catalyses the reaction L-methionine + ATP + H2O = S-adenosyl-L-methionine + phosphate + diphosphate. It participates in amino-acid biosynthesis; S-adenosyl-L-methionine biosynthesis; S-adenosyl-L-methionine from L-methionine: step 1/1. Its function is as follows. Catalyzes the formation of S-adenosylmethionine (AdoMet) from methionine and ATP. The overall synthetic reaction is composed of two sequential steps, AdoMet formation and the subsequent tripolyphosphate hydrolysis which occurs prior to release of AdoMet from the enzyme. This Burkholderia mallei (strain NCTC 10247) protein is S-adenosylmethionine synthase.